Here is a 264-residue protein sequence, read N- to C-terminus: Hemin import ATP-binding protein HmuV (264 aa).

An ABC transporter domain is found at 10–246; it reads LQAQNLSYSI…HTLRKWYQAD (237 aa). Position 42 to 49 (42 to 49) interacts with ATP; sequence GPNGAGKS.

This sequence belongs to the ABC transporter superfamily. Heme (hemin) importer (TC 3.A.1.14.5) family. In terms of assembly, the complex is composed of two ATP-binding proteins (HmuV), two transmembrane proteins (HmuU) and a solute-binding protein (HmuT).

The protein resides in the cell inner membrane. Functionally, part of the ABC transporter complex HmuTUV involved in hemin import. Responsible for energy coupling to the transport system. The protein is Hemin import ATP-binding protein HmuV of Photorhabdus laumondii subsp. laumondii (strain DSM 15139 / CIP 105565 / TT01) (Photorhabdus luminescens subsp. laumondii).